A 227-amino-acid chain; its full sequence is Chalcone--flavanone isomerase (227 aa).

Substrate is bound by residues Thr-50, Asn-115, and Ser-192.

The protein belongs to the chalcone isomerase family. In terms of tissue distribution, fibers.

It carries out the reaction a chalcone = a flavanone.. The protein operates within secondary metabolite biosynthesis; flavonoid biosynthesis. In terms of biological role, catalyzes the intramolecular cyclization of bicyclic chalcones into tricyclic (S)-flavanones. Responsible for the isomerization of 4,2',4',6'-tetrahydroxychalcone (also termed chalcone) into naringenin. The protein is Chalcone--flavanone isomerase (CHI) of Gossypium hirsutum (Upland cotton).